The following is a 793-amino-acid chain: uncharacterized protein (793 aa).

The first 22 residues, 1–22 (MKFKYGAIFFSGFLGLSAILAA), serve as a signal peptide directing secretion. Cysteine 23 is lipidated: N-palmitoyl cysteine. A lipid anchor (S-diacylglycerol cysteine) is attached at cysteine 23. Disordered stretches follow at residues 181-200 (LNQK…TLTV), 212-264 (KIED…DDQV), and 444-504 (KAPS…SNNN). Basic and acidic residues predominate over residues 212 to 227 (KIEDSAKANGKSDEKG). Residues 237 to 246 (ATFSLVQLKQ) are compositionally biased toward polar residues. A compositionally biased stretch (basic and acidic residues) spans 247–264 (TQEKTDDSQDTKNSDDQV). Residues 449 to 468 (NGENGQTNEGNSTNGEQNLL) are compositionally biased toward polar residues. Positions 472–485 (EVKDDSKPKEEVKS) are enriched in basic and acidic residues. Positions 491–504 (KESSQNQGKKSNNN) are enriched in low complexity.

This sequence belongs to the MG185/MG260 family.

It is found in the cell membrane. This is an uncharacterized protein from Mycoplasma pneumoniae (strain ATCC 29342 / M129 / Subtype 1) (Mycoplasmoides pneumoniae).